Reading from the N-terminus, the 596-residue chain is Elongation factor 4 (596 aa).

Residues K2–V183 enclose the tr-type G domain. GTP contacts are provided by residues D14–T19 and N130–D133.

It belongs to the TRAFAC class translation factor GTPase superfamily. Classic translation factor GTPase family. LepA subfamily.

It localises to the cell inner membrane. It carries out the reaction GTP + H2O = GDP + phosphate + H(+). Required for accurate and efficient protein synthesis under certain stress conditions. May act as a fidelity factor of the translation reaction, by catalyzing a one-codon backward translocation of tRNAs on improperly translocated ribosomes. Back-translocation proceeds from a post-translocation (POST) complex to a pre-translocation (PRE) complex, thus giving elongation factor G a second chance to translocate the tRNAs correctly. Binds to ribosomes in a GTP-dependent manner. The protein is Elongation factor 4 of Sulfurimonas denitrificans (strain ATCC 33889 / DSM 1251) (Thiomicrospira denitrificans (strain ATCC 33889 / DSM 1251)).